The primary structure comprises 553 residues: Mucolipin-3 (553 aa).

At 1–62 (MANPEVLVSS…FWARGRKPWK (62 aa)) the chain is on the cytoplasmic side. Residues 52–62 (KFWARGRKPWK) are interaction with phosphoinositides. A helical membrane pass occupies residues 63 to 83 (LAIQILKIAMVTIQLVLFGLS). The Extracellular segment spans residues 84–283 (NQMVVAFKEE…VSGSIQKNTH (200 aa)). The tract at residues 104-118 (KGYMDRMDDTYAVYT) is extracellular/lumenal pore loop. N-linked (GlcNAc...) asparagine glycosylation occurs at asparagine 138. The cysteines at positions 159 and 185 are disulfide-linked. Asparagine 205 carries an N-linked (GlcNAc...) asparagine glycan. Cysteine 238 and cysteine 269 are disulfide-bonded. Residues 284-304 (YMMIFDAFVILTCLASLVLCA) traverse the membrane as a helical segment. Topologically, residues 305 to 341 (RSVIRGLQLQQEFVNFFLLHYKKEVSASDQMEFINGW) are cytoplasmic. The chain crosses the membrane as a helical span at residues 342–362 (YIMIIISDILTIVGSVLKMEI). Over 363 to 371 (QAKSLTSYD) the chain is Extracellular. Residues 372-392 (VCSILLGTSTMLVWLGVIRYL) traverse the membrane as a helical segment. Residues 393-414 (GFFAKYNLLILTLQAALPNVMR) lie on the Cytoplasmic side of the membrane. Residues 415-435 (FCCCAAMIYLGYCFCGWIVLG) traverse the membrane as a helical segment. Residues 436 to 443 (PYHEKFRS) are Extracellular-facing. Residues 444 to 464 (LNRVSECLFSLINGDDMFSTF) constitute an intramembrane region (pore-forming). The Selectivity filter motif lies at 456-459 (NGDD). Over 465–475 (AKMQQKSYLVW) the chain is Extracellular. Residues 476 to 497 (LFSRVYLYSFISLFIYMILSLF) traverse the membrane as a helical segment. The Cytoplasmic segment spans residues 498-553 (IALITDTYETIKHYQQDGFPETELRKFIAECKDLPNSGKYRLEDDPPGSLLCCCKK).

It belongs to the transient receptor (TC 1.A.4) family. Polycystin subfamily. MCOLN3 sub-subfamily. Homotetramer. Can heterooligomerize with MCOLN1; heteromeric assemblies have different channel properties as compared to the respective homooligomers and may be tissue-specific. May heterooligomerize with TRPV5 to form a functional distinct ion channel. Interacts with GABARAPL2. In terms of processing, N-glycosylated. In terms of tissue distribution, expressed in the cochlea; particularly in the inner and outer hair cells (at protein level).

Its subcellular location is the early endosome membrane. The protein localises to the late endosome membrane. It localises to the cytoplasmic vesicle. It is found in the autophagosome membrane. The protein resides in the cell projection. Its subcellular location is the stereocilium membrane. The enzyme catalyses Ca(2+)(in) = Ca(2+)(out). It catalyses the reaction Mg(2+)(in) = Mg(2+)(out). The catalysed reaction is K(+)(in) = K(+)(out). It carries out the reaction Na(+)(in) = Na(+)(out). With respect to regulation, channel activity is activated by PtdIns(3,5)P2 (phosphatidylinositol 3,5-bisphosphate). Inhibited by lumenal H(+) and Na(+). The channel pore shows dynamic behavior and undergoes spontaneous, Ca(2+)-dependent modulation when conducting Ca(2+). In terms of biological role, nonselective cation channel probably playing a role in the regulation of membrane trafficking events. Acts as a Ca(2+)-permeable cation channel with inwardly rectifying activity. Mediates release of Ca(2+) from endosomes to the cytoplasm, contributes to endosomal acidification and is involved in the regulation of membrane trafficking and fusion in the endosomal pathway. Also permeable to Mg(2+), Na(+) and K(+). Does not seem to act as mechanosensory transduction channel in inner ear sensory hair cells. Proposed to play a critical role at the cochlear stereocilia ankle-link region during hair-bundle growth. Involved in the regulation of autophagy. Through association with GABARAPL2 may be involved in autophagosome formation possibly providing Ca(2+) for the fusion process. Through a possible and probably tissue-specific heteromerization with MCOLN1 may be at least in part involved in many lysosome-dependent cellular events. Possible heteromeric ion channel assemblies with TRPV5 show pharmacological similarity with TRPML3. This Mus musculus (Mouse) protein is Mucolipin-3 (Mcoln3).